The sequence spans 513 residues: ATP synthase subunit alpha (513 aa).

Residue 170-177 participates in ATP binding; sequence GDRQTGKT.

Belongs to the ATPase alpha/beta chains family. In terms of assembly, F-type ATPases have 2 components, CF(1) - the catalytic core - and CF(0) - the membrane proton channel. CF(1) has five subunits: alpha(3), beta(3), gamma(1), delta(1), epsilon(1). CF(0) has three main subunits: a(1), b(2) and c(9-12). The alpha and beta chains form an alternating ring which encloses part of the gamma chain. CF(1) is attached to CF(0) by a central stalk formed by the gamma and epsilon chains, while a peripheral stalk is formed by the delta and b chains.

It localises to the cell inner membrane. It catalyses the reaction ATP + H2O + 4 H(+)(in) = ADP + phosphate + 5 H(+)(out). Its function is as follows. Produces ATP from ADP in the presence of a proton gradient across the membrane. The alpha chain is a regulatory subunit. The chain is ATP synthase subunit alpha from Teredinibacter turnerae (strain ATCC 39867 / T7901).